Here is an 88-residue protein sequence, read N- to C-terminus: Small ribosomal subunit protein bS20 (88 aa).

The disordered stretch occupies residues 1 to 27 (MANSKSAKKRALQSEKRRQHNASRRSM).

The protein belongs to the bacterial ribosomal protein bS20 family.

Binds directly to 16S ribosomal RNA. The chain is Small ribosomal subunit protein bS20 from Shewanella sediminis (strain HAW-EB3).